Here is a 185-residue protein sequence, read N- to C-terminus: Elongation factor P (185 aa).

The protein belongs to the elongation factor P family.

The protein resides in the cytoplasm. The protein operates within protein biosynthesis; polypeptide chain elongation. Its function is as follows. Involved in peptide bond synthesis. Stimulates efficient translation and peptide-bond synthesis on native or reconstituted 70S ribosomes in vitro. Probably functions indirectly by altering the affinity of the ribosome for aminoacyl-tRNA, thus increasing their reactivity as acceptors for peptidyl transferase. The chain is Elongation factor P from Staphylococcus carnosus (strain TM300).